Here is a 602-residue protein sequence, read N- to C-terminus: Elongation factor 4 (602 aa).

A tr-type G domain is found at 7–189 (KFIRNFSIIA…QLVVAIPPPV (183 aa)). GTP is bound by residues 19–24 (DHGKST) and 136–139 (NKID).

It belongs to the TRAFAC class translation factor GTPase superfamily. Classic translation factor GTPase family. LepA subfamily.

The protein resides in the cell inner membrane. The enzyme catalyses GTP + H2O = GDP + phosphate + H(+). Functionally, required for accurate and efficient protein synthesis under certain stress conditions. May act as a fidelity factor of the translation reaction, by catalyzing a one-codon backward translocation of tRNAs on improperly translocated ribosomes. Back-translocation proceeds from a post-translocation (POST) complex to a pre-translocation (PRE) complex, thus giving elongation factor G a second chance to translocate the tRNAs correctly. Binds to ribosomes in a GTP-dependent manner. The protein is Elongation factor 4 of Coxiella burnetii (strain Dugway 5J108-111).